The chain runs to 185 residues: NADH-quinone oxidoreductase subunit B (185 aa).

4 residues coordinate [4Fe-4S] cluster: Cys-38, Cys-39, Cys-104, and Cys-133.

Belongs to the complex I 20 kDa subunit family. As to quaternary structure, NDH-1 is composed of 14 different subunits. Subunits NuoB, C, D, E, F, and G constitute the peripheral sector of the complex. [4Fe-4S] cluster serves as cofactor.

The protein localises to the cell membrane. It carries out the reaction a quinone + NADH + 5 H(+)(in) = a quinol + NAD(+) + 4 H(+)(out). Its function is as follows. NDH-1 shuttles electrons from NADH, via FMN and iron-sulfur (Fe-S) centers, to quinones in the respiratory chain. The immediate electron acceptor for the enzyme in this species is believed to be a menaquinone. Couples the redox reaction to proton translocation (for every two electrons transferred, four hydrogen ions are translocated across the cytoplasmic membrane), and thus conserves the redox energy in a proton gradient. This is NADH-quinone oxidoreductase subunit B from Cutibacterium acnes (strain DSM 16379 / KPA171202) (Propionibacterium acnes).